The following is a 62-amino-acid chain: Alpha-toxin Tf4 (62 aa).

The 61-residue stretch at 2 to 62 (KEGYPADSKG…SVWDSATNKC (61 aa)) folds into the LCN-type CS-alpha/beta domain. Cystine bridges form between Cys12/Cys62, Cys16/Cys38, Cys24/Cys43, and Cys28/Cys45. The residue at position 62 (Cys62) is a Cysteine amide.

Expressed by the venom gland.

It is found in the secreted. Functionally, alpha toxins bind voltage-independently at site-3 of sodium channels (Nav) and inhibit the inactivation of the activated channels, thereby blocking neuronal transmission. This toxin is toxic to frogs but non-toxic to insect larvae (T.molitor), mammals (rats) and crustaceans (crabs) at the doses assayed. The protein is Alpha-toxin Tf4 of Tityus fasciolatus (Central Brazilian scorpion).